A 198-amino-acid polypeptide reads, in one-letter code: Large ribosomal subunit protein uL5 (198 aa).

It belongs to the universal ribosomal protein uL5 family. Part of the 50S ribosomal subunit; part of the 5S rRNA/L5/L18/L25 subcomplex. Contacts the 5S rRNA and the P site tRNA. Forms a bridge to the 30S subunit in the 70S ribosome.

Functionally, this is one of the proteins that bind and probably mediate the attachment of the 5S RNA into the large ribosomal subunit, where it forms part of the central protuberance. In the 70S ribosome it contacts protein S13 of the 30S subunit (bridge B1b), connecting the 2 subunits; this bridge is implicated in subunit movement. Contacts the P site tRNA; the 5S rRNA and some of its associated proteins might help stabilize positioning of ribosome-bound tRNAs. The sequence is that of Large ribosomal subunit protein uL5 from Chlorobium phaeovibrioides (strain DSM 265 / 1930) (Prosthecochloris vibrioformis (strain DSM 265)).